The chain runs to 103 residues: Putative inactive recombination-promoting nuclease-like protein YjiP (103 aa).

This sequence belongs to the Rpn/YhgA-like nuclease family.

This pseudogene is the N-terminal fragment of low activity DNA endonuclease RpnD which probably yields 3'-hydroxyl ends. The intact protein can be seen in this entry (AC B7NGZ6). Expression of the repaired protein increases the frequency of recA-independent recombination, but also decreases viability probably via DNA damage; in a RecA strain expression has no effect on viability but does induce the SOS repair response. May play a role in horizontal gene transfer. The sequence is that of Putative inactive recombination-promoting nuclease-like protein YjiP (yjiP) from Escherichia coli (strain K12).